The primary structure comprises 200 residues: NADH-quinone oxidoreductase subunit C (200 aa).

The protein belongs to the complex I 30 kDa subunit family. In terms of assembly, NDH-1 is composed of 14 different subunits. Subunits NuoB, C, D, E, F, and G constitute the peripheral sector of the complex.

It is found in the cell inner membrane. The enzyme catalyses a quinone + NADH + 5 H(+)(in) = a quinol + NAD(+) + 4 H(+)(out). Its function is as follows. NDH-1 shuttles electrons from NADH, via FMN and iron-sulfur (Fe-S) centers, to quinones in the respiratory chain. The immediate electron acceptor for the enzyme in this species is believed to be ubiquinone. Couples the redox reaction to proton translocation (for every two electrons transferred, four hydrogen ions are translocated across the cytoplasmic membrane), and thus conserves the redox energy in a proton gradient. This Ruegeria pomeroyi (strain ATCC 700808 / DSM 15171 / DSS-3) (Silicibacter pomeroyi) protein is NADH-quinone oxidoreductase subunit C.